A 228-amino-acid polypeptide reads, in one-letter code: MSYVFVNDSSQTNVPLLQACIDGDFTYSKRLLESGFDPNIRDSRGRTGLHLAAARGNVDICQLLHKFGADPLATDYQGNTALHLCGHVDTIQFLVSNGLKIDICNHQGATPLVLAKRRGVNKDVIRLLESLEEQEVKGFNRGAHSKLETMQTAESESAMESHSLLNPNLQQGEGVLSSFRTTWQEFVEDLGFWRVLLLILVIALLSLGIAYYVSGVLPFVDNQPELVH.

4 ANK repeats span residues 11–40, 44–74, 77–103, and 107–138; these read QTNVPLLQACIDGDFTYSKRLLESGFDPNI, RGRTGLHLAAARGNVDICQLLHKFGADPLAT, QGNTALHLCGHVDTIQFLVSNGLKIDI, and QGATPLVLAKRRGVNKDVIRLLESLEEQEVKG. A helical transmembrane segment spans residues 195 to 215; that stretch reads VLLLILVIALLSLGIAYYVSG.

Its subcellular location is the membrane. In Mus musculus (Mouse), this protein is Ankyrin repeat domain-containing protein 46 (Ankrd46).